The following is a 460-amino-acid chain: ATP synthase subunit beta (460 aa).

An ATP-binding site is contributed by 150–157 (GGAGVGKT).

Belongs to the ATPase alpha/beta chains family. F-type ATPases have 2 components, CF(1) - the catalytic core - and CF(0) - the membrane proton channel. CF(1) has five subunits: alpha(3), beta(3), gamma(1), delta(1), epsilon(1). CF(0) has three main subunits: a(1), b(2) and c(9-12). The alpha and beta chains form an alternating ring which encloses part of the gamma chain. CF(1) is attached to CF(0) by a central stalk formed by the gamma and epsilon chains, while a peripheral stalk is formed by the delta and b chains.

The protein resides in the cell inner membrane. It carries out the reaction ATP + H2O + 4 H(+)(in) = ADP + phosphate + 5 H(+)(out). Functionally, produces ATP from ADP in the presence of a proton gradient across the membrane. The catalytic sites are hosted primarily by the beta subunits. This is ATP synthase subunit beta from Sodalis glossinidius (strain morsitans).